The chain runs to 173 residues: NADH-ubiquinone oxidoreductase chain 6 (173 aa).

The next 6 membrane-spanning stretches (helical) occupy residues 1–21, 27–47, 48–68, 87–107, 113–133, and 139–159; these read MTYF…AVAS, YGVV…LSLG, VSFV…VVFV, VVGY…VGGF, FGVI…FGGV, and CGVG…FVVL.

The protein belongs to the complex I subunit 6 family.

It localises to the mitochondrion membrane. The enzyme catalyses a ubiquinone + NADH + 5 H(+)(in) = a ubiquinol + NAD(+) + 4 H(+)(out). Functionally, core subunit of the mitochondrial membrane respiratory chain NADH dehydrogenase (Complex I) that is believed to belong to the minimal assembly required for catalysis. Complex I functions in the transfer of electrons from NADH to the respiratory chain. The immediate electron acceptor for the enzyme is believed to be ubiquinone. The protein is NADH-ubiquinone oxidoreductase chain 6 (MT-ND6) of Alle alle (Dovekie).